The primary structure comprises 341 residues: Protein RecA, plasmid (341 aa).

80–87 contacts ATP; it reads GAESSGKT.

This sequence belongs to the RecA family.

It localises to the cytoplasm. Functionally, can catalyze the hydrolysis of ATP in the presence of single-stranded DNA, the ATP-dependent uptake of single-stranded DNA by duplex DNA, and the ATP-dependent hybridization of homologous single-stranded DNAs. It interacts with LexA causing its activation and leading to its autocatalytic cleavage. This chain is Protein RecA, plasmid, found in Lactococcus lactis subsp. lactis (Streptococcus lactis).